We begin with the raw amino-acid sequence, 354 residues long: Ribosomal RNA large subunit methyltransferase M (354 aa).

S-adenosyl-L-methionine-binding positions include S183, 216 to 219, D235, D255, and D271; that span reads SPGG. K300 serves as the catalytic Proton acceptor.

The protein belongs to the class I-like SAM-binding methyltransferase superfamily. RNA methyltransferase RlmE family. RlmM subfamily. As to quaternary structure, monomer.

It is found in the cytoplasm. It carries out the reaction cytidine(2498) in 23S rRNA + S-adenosyl-L-methionine = 2'-O-methylcytidine(2498) in 23S rRNA + S-adenosyl-L-homocysteine + H(+). Catalyzes the 2'-O-methylation at nucleotide C2498 in 23S rRNA. The polypeptide is Ribosomal RNA large subunit methyltransferase M (Pseudomonas putida (strain ATCC 700007 / DSM 6899 / JCM 31910 / BCRC 17059 / LMG 24140 / F1)).